Here is a 292-residue protein sequence, read N- to C-terminus: Potassium channel, subfamily K, member 16 (292 aa).

Residues 1 to 13 are Cytoplasmic-facing; sequence MPRAGVCGCWGGQ. The chain crosses the membrane as a helical span at residues 14–34; the sequence is VLPLLLAYICYLLLGATIFQL. The segment at residues 98–116 is an intramembrane region (pore-forming); that stretch reads SFFFAGTVVTTIGYGNLAP. The K(+) site is built by threonine 108, isoleucine 109, glycine 110, and tyrosine 111. Positions 108-113 are selectivity filter 1; the sequence is TIGYGN. The chain crosses the membrane as a helical span at residues 120 to 140; the sequence is AGQVFCVFYALMGIPLNVVFL. The Cytoplasmic portion of the chain corresponds to 141-165; the sequence is NHLGTGLRAHLTTLDRWEDHPRHSQ. A helical transmembrane segment spans residues 166-186; sequence LLQVLGLALFLTLGTLVILIF. Residues 202 to 221 constitute an intramembrane region (pore-forming); that stretch reads GFYFAFITLSTIGFGDYVVG. 4 residues coordinate K(+): threonine 212, isoleucine 213, glycine 214, and phenylalanine 215. The selectivity filter 2 stretch occupies residues 212–217; that stretch reads TIGFGD. The helical transmembrane segment at 238–258 threads the bilayer; the sequence is IWILLGLAWLAVVLSLGSLLL. Residues 259–292 are Cytoplasmic-facing; the sequence is HRCSRLWQLIRGLDLKDGAAPDSEPRSQKIPISA.

This sequence belongs to the two pore domain potassium channel (TC 1.A.1.8) family. As to quaternary structure, homodimer; disulfide-linked. Heterodimer with KCNK17 and KCNK5. Expressed in pacreatic beta-cells (at protein level). Expressed in pacreatic delta-cells (at protein level).

The protein resides in the cell membrane. It localises to the endoplasmic reticulum membrane. Its subcellular location is the mitochondrion inner membrane. The enzyme catalyses K(+)(in) = K(+)(out). It catalyses the reaction Rb(+)(in) = Rb(+)(out). It carries out the reaction Cs(+)(in) = Cs(+)(out). Functionally, k(+) channel that conducts voltage-dependent outward rectifying currents upon membrane depolarization. Voltage sensing is coupled to K(+) electrochemical gradient in an 'ion flux gating' mode where outward but not inward ion flow opens the gate. Homo- and heterodimerizes to form functional channels with distinct regulatory and gating properties. In pancreatic islets, conducts K(+) countercurrents for Ca(2+) release from the endoplasmic reticulum (ER) and regulates the frequency and duration of cytosolic Ca(2+) oscillations coupled to secretion of pancreatic hormones. In pancreatic beta cells, drives ER Ca(2+) efflux, which in turn activates Ca(2+)-dependent plasma membrane K(+) slow currents and cytosolic Ca(2+) influx, overall contributing to synchronous cytosolic Ca(2+) oscillations. Limits glucose-induced cytosolic Ca(2+) oscillations coupled to second-phase INS secretion. Contributes to beta cell adaptation to acute inflammation by maintaining normal cytosolic Ca(2+) levels and INS secretion. May regulate beta cell mitochondrial Ca(2+) levels either indirectly via ER Ca(2+) efflux or directly by hyperpolarizing the mitochondrial membrane potential. Limits mitochondrial Ca(2+) oscillations and ATP production involved in glucose homeostasis upon metabolic stress. In pancreatic delta cells, limits Ca(2+)-induced Ca(2+)-release involved in somatostatin secretion and modulates islet paracrine signaling involved in glucagon secretion. Permeable to other monovalent cations such as Rb(+) and Cs(+). This chain is Potassium channel, subfamily K, member 16, found in Mus musculus (Mouse).